A 707-amino-acid polypeptide reads, in one-letter code: Elongation factor G (707 aa).

The tr-type G domain occupies 8-297 (ERVRNIGIAA…AVVDYLPSPV (290 aa)). Residues 17-24 (AHIDAGKT), 96-100 (DTPGH), and 150-153 (NKMD) each bind GTP.

It belongs to the TRAFAC class translation factor GTPase superfamily. Classic translation factor GTPase family. EF-G/EF-2 subfamily.

The protein localises to the cytoplasm. Catalyzes the GTP-dependent ribosomal translocation step during translation elongation. During this step, the ribosome changes from the pre-translocational (PRE) to the post-translocational (POST) state as the newly formed A-site-bound peptidyl-tRNA and P-site-bound deacylated tRNA move to the P and E sites, respectively. Catalyzes the coordinated movement of the two tRNA molecules, the mRNA and conformational changes in the ribosome. The polypeptide is Elongation factor G (Synechococcus sp. (strain JA-2-3B'a(2-13)) (Cyanobacteria bacterium Yellowstone B-Prime)).